The sequence spans 142 residues: Large ribosomal subunit protein uL11 (142 aa).

Belongs to the universal ribosomal protein uL11 family. As to quaternary structure, part of the ribosomal stalk of the 50S ribosomal subunit. Interacts with L10 and the large rRNA to form the base of the stalk. L10 forms an elongated spine to which L12 dimers bind in a sequential fashion forming a multimeric L10(L12)X complex. One or more lysine residues are methylated.

Forms part of the ribosomal stalk which helps the ribosome interact with GTP-bound translation factors. This is Large ribosomal subunit protein uL11 from Shewanella sediminis (strain HAW-EB3).